The following is a 79-amino-acid chain: Neurotoxin BmK-M9 (79 aa).

Residues 1 to 14 (MISFALLLMTGVES) form the signal peptide. In terms of domain architecture, LCN-type CS-alpha/beta spans 16-78 (RDAYIAKPEN…VPIRVPGKCH (63 aa)). Disulfide bonds link cysteine 26-cysteine 77, cysteine 30-cysteine 50, cysteine 36-cysteine 60, and cysteine 40-cysteine 62. A propeptide (removed by a carboxypeptidase) is located at residue arginine 79.

The protein belongs to the long (4 C-C) scorpion toxin superfamily. Sodium channel inhibitor family. Alpha subfamily. In terms of tissue distribution, expressed by the venom gland.

It is found in the secreted. Binds to sodium channels (Nav) and inhibits the inactivation of the activated channels, thereby blocking neuronal transmission. This toxin is active against mammals. The protein is Neurotoxin BmK-M9 of Olivierus martensii (Manchurian scorpion).